Reading from the N-terminus, the 281-residue chain is 3-hydroxyanthranilate 3,4-dioxygenase (281 aa).

Residues 1–162 (MSGVTAIEIP…SNEFKTGKPG (162 aa)) form a domain A (catalytic) region. Residue Arg45 coordinates O2. Residues His49, Glu55, and His93 each coordinate Fe cation. Residue Glu55 participates in substrate binding. 2 residues coordinate substrate: Arg97 and Glu107. A linker region spans residues 163-179 (KGTFACNAPYEARWTDL). The segment at 180-281 (PVPINRKEFI…GFAITIRMPA (102 aa)) is domain B.

It belongs to the 3-HAO family. Fe(2+) serves as cofactor.

The protein resides in the cytoplasm. The enzyme catalyses 3-hydroxyanthranilate + O2 = (2Z,4Z)-2-amino-3-carboxymuconate 6-semialdehyde. It functions in the pathway cofactor biosynthesis; NAD(+) biosynthesis; quinolinate from L-kynurenine: step 3/3. Catalyzes the oxidative ring opening of 3-hydroxyanthranilate to 2-amino-3-carboxymuconate semialdehyde, which spontaneously cyclizes to quinolinate. The protein is 3-hydroxyanthranilate 3,4-dioxygenase (haao-1) of Caenorhabditis elegans.